We begin with the raw amino-acid sequence, 507 residues long: Maturase K (507 aa).

Belongs to the intron maturase 2 family. MatK subfamily.

It localises to the plastid. The protein resides in the chloroplast. Its function is as follows. Usually encoded in the trnK tRNA gene intron. Probably assists in splicing its own and other chloroplast group II introns. The polypeptide is Maturase K (Ranunculus acris (Meadow buttercup)).